We begin with the raw amino-acid sequence, 329 residues long: Carbonic anhydrase (329 aa).

Residues 1-108 form a chloroplast transit peptide-like region; that stretch reads MSTASAFAIN…AAARIDQITA (108 aa).

This sequence belongs to the beta-class carbonic anhydrase family. As to quaternary structure, homohexamer.

The protein resides in the cytoplasm. It catalyses the reaction hydrogencarbonate + H(+) = CO2 + H2O. Reversible hydration of carbon dioxide. The sequence is that of Carbonic anhydrase from Flaveria pringlei.